The chain runs to 388 residues: Putative N(4)-(beta-N-acetylglucosaminyl)-L-asparaginase GL17147 (388 aa).

The first 20 residues, 1-20 (MYKAQYLWLFGLVLISRSAT), serve as a signal peptide directing secretion. 2 cysteine pairs are disulfide-bonded: C94/C99 and C193/C209. T240 (nucleophile) is an active-site residue. Residues 268 to 271 (RVGD) and 291 to 294 (TGDG) contribute to the substrate site. C351 and C378 are disulfide-bonded.

It belongs to the Ntn-hydrolase family. As to quaternary structure, heterotetramer of two alpha and two beta chains arranged as a dimer of alpha/beta heterodimers. Post-translationally, cleaved into an alpha and beta chain by autocatalysis; this activates the enzyme. The N-terminal residue of the beta subunit is responsible for the nucleophile hydrolase activity.

The enzyme catalyses N(4)-(beta-N-acetyl-D-glucosaminyl)-L-asparagine + H2O = N-acetyl-beta-D-glucosaminylamine + L-aspartate + H(+). Its function is as follows. Cleaves the GlcNAc-Asn bond which joins oligosaccharides to the peptide of asparagine-linked glycoproteins. In Drosophila persimilis (Fruit fly), this protein is Putative N(4)-(beta-N-acetylglucosaminyl)-L-asparaginase GL17147.